We begin with the raw amino-acid sequence, 183 residues long: Protein vem-1 (183 aa).

The helical transmembrane segment at F9 to T29 threads the bilayer. Positions M47–V146 constitute a Cytochrome b5 heme-binding domain.

This sequence belongs to the cytochrome b5 family. MAPR subfamily. Interacts with unc-40 (via cytoplasmic domain). Expressed in the AVG pioneer midline neuron and in several nerve ring neurons that extend projecting axons into the right ventral nerve cord.

Its subcellular location is the membrane. The protein resides in the cell projection. The protein localises to the axon. Its function is as follows. Transmembrane protein required for the axon guidance of a subset of ventral nerve cord-associated interneurons and motor neurons. May function with the netrin receptor unc-40 in axon guidance. The protein is Protein vem-1 of Caenorhabditis elegans.